The following is a 171-amino-acid chain: PRA1-like protein (171 aa).

A run of 3 helical transmembrane segments spans residues 67–87, 119–139, and 140–160; these read AIIA…LIVI, VILA…ETII, and WLVG…EPPV.

The protein belongs to the PRA1 family.

The protein localises to the membrane. This Schizosaccharomyces pombe (strain 972 / ATCC 24843) (Fission yeast) protein is PRA1-like protein.